The sequence spans 119 residues: Large ribosomal subunit protein bL20 (119 aa).

The protein belongs to the bacterial ribosomal protein bL20 family.

Functionally, binds directly to 23S ribosomal RNA and is necessary for the in vitro assembly process of the 50S ribosomal subunit. It is not involved in the protein synthesizing functions of that subunit. The polypeptide is Large ribosomal subunit protein bL20 (Heliobacterium modesticaldum (strain ATCC 51547 / Ice1)).